A 344-amino-acid chain; its full sequence is Protein YRO2 (344 aa).

Residues 1-34 (MSDYVELLKRGGNEAIKINPPTGADFHITSRGSD) are Extracellular-facing. The chain crosses the membrane as a helical span at residues 35–55 (WLFTVFCVNLLFGVILVPLMF). Over 56–62 (RKPVKDR) the chain is Cytoplasmic. A helical membrane pass occupies residues 63-83 (FVYYTAIAPNLFMSIAYFTMA). Topologically, residues 84–119 (SNLGWIPVRAKYNHVQTSTQKEHPGYRQIFYARYVG) are extracellular. A helical membrane pass occupies residues 120-140 (WFLAFPWPIIQMSLLGGTPLW). Position 141 (Gln141) is a topological domain, cytoplasmic. The chain crosses the membrane as a helical span at residues 142 to 162 (IAFNVGMTEIFTVCWLIAACV). Over 163–172 (HSTYKWGYYT) the chain is Extracellular. A helical membrane pass occupies residues 173-193 (IGIGAAIVVCISLMTTTFNLV). At 194-202 (KARGKDVSN) the chain is on the cytoplasmic side. The helical transmembrane segment at 203 to 223 (VFITFMSVIMFLWLIAYPTCF) threads the bilayer. The Extracellular segment spans residues 224-238 (GITDGGNVLQPDSAT). Residues 239-259 (IFYGIIDLLILSILPVLFMPL) traverse the membrane as a helical segment. At 260-344 (ANYLGIERLG…EEEDVATDSE (85 aa)) the chain is on the cytoplasmic side. The segment at 282–344 (PVAEKKMPSP…EEEDVATDSE (63 aa)) is disordered. Lys286 is covalently cross-linked (Glycyl lysine isopeptide (Lys-Gly) (interchain with G-Cter in ubiquitin)). Ser293 carries the post-translational modification Phosphoserine. Basic and acidic residues predominate over residues 297 to 306 (SDSDSSIKEK). Residues 307–330 (LKLKKKHKKDKKKAKKAKKAKKAK) are compositionally biased toward basic residues. Over residues 334–344 (EEEEDVATDSE) the composition is skewed to acidic residues. Residue Thr341 is modified to Phosphothreonine. At Ser343 the chain carries Phosphoserine.

It belongs to the archaeal/bacterial/fungal opsin family.

The protein resides in the membrane. This chain is Protein YRO2 (YRO2), found in Saccharomyces cerevisiae (strain ATCC 204508 / S288c) (Baker's yeast).